Consider the following 124-residue polypeptide: Transcription initiation factor TFIID subunit 13 (124 aa).

Over residues 1-16 (MADEEEDPTFEEENEE) the composition is skewed to acidic residues. The disordered stretch occupies residues 1–28 (MADEEEDPTFEEENEEIGGGAEGGQGKR). The 43-residue stretch at 32-74 (FSKELRCMMYGFGDDQNPYTESVDILEDLVIEFITEMTHKAMS) folds into the Histone-fold domain.

It belongs to the TAF13 family. As to quaternary structure, component of the TFIID basal transcription factor complex, composed of TATA-box-binding protein TBP, and a number of TBP-associated factors (TAFs), including TAF1, TAF2, TAF3, TAF4, TAF5, TAF6, TAF7, TAF8, TAF9, TAF10, TAF11, TAF12 and TAF13. Interacts with TBP, and more strongly with TAF10 and TAF11.

The protein localises to the nucleus. The TFIID basal transcription factor complex plays a major role in the initiation of RNA polymerase II (Pol II)-dependent transcription. TFIID recognizes and binds promoters via its subunit TBP, a TATA-box-binding protein, and promotes assembly of the pre-initiation complex (PIC). The TFIID complex consists of TBP and TBP-associated factors (TAFs), including TAF1, TAF2, TAF3, TAF4, TAF5, TAF6, TAF7, TAF8, TAF9, TAF10, TAF11, TAF12 and TAF13. TAF13, together with TAF11 and TBP, play key roles during promoter binding by the TFIID and TFIIA transcription factor complexes. This is Transcription initiation factor TFIID subunit 13 from Bos taurus (Bovine).